Here is a 697-residue protein sequence, read N- to C-terminus: Zinc finger protein 12 (697 aa).

Residue lysine 3 forms a Glycyl lysine isopeptide (Lys-Gly) (interchain with G-Cter in SUMO2) linkage. A KRAB domain is found at 8-79 (VSFKDVAVDF…EGEFLLQSYP (72 aa)). Glycyl lysine isopeptide (Lys-Gly) (interchain with G-Cter in SUMO2) cross-links involve residues lysine 98, lysine 179, lysine 182, lysine 209, lysine 215, lysine 224, lysine 239, and lysine 267. 2 C2H2-type zinc fingers span residues 269-291 (YECS…QRTH) and 297-319 (YECN…QRTH). Residues lysine 309, lysine 323, lysine 337, and lysine 365 each participate in a glycyl lysine isopeptide (Lys-Gly) (interchain with G-Cter in SUMO2) cross-link. C2H2-type zinc fingers lie at residues 325 to 347 (YECN…QRTH), 353 to 375 (YECS…QRTH), 381 to 403 (YVCH…QKIH), 409 to 431 (YKCS…LRTH), 437 to 459 (YECN…YRTH), 465 to 487 (YECN…QRVH), 493 to 515 (YECN…HRTH), and 521 to 543 (YECS…RRIH). Glycyl lysine isopeptide (Lys-Gly) (interchain with G-Cter in SUMO2) cross-links involve residues lysine 544 and lysine 547. 5 consecutive C2H2-type zinc fingers follow at residues 549 to 571 (YECY…HRIH), 577 to 599 (YECS…QRTH), 605 to 627 (YECY…HRIH), 633 to 655 (FECN…YRTH), and 661 to 683 (YECT…QRIH).

This sequence belongs to the krueppel C2H2-type zinc-finger protein family. Widely expressed in various adult tissues and embryonic developmental stages (isoform 3).

The protein resides in the nucleus. Functionally, transcriptional repressor which suppresses activation protein 1 (AP-1)- and serum response element (SRE)-mediated transcriptional activity. This Homo sapiens (Human) protein is Zinc finger protein 12 (ZNF12).